The sequence spans 456 residues: Chordin-like protein 1 (456 aa).

A signal peptide spans 1 to 28; sequence MRRKWRSEDFHFVFFGVLCLLLIDRGKL. VWFC domains are found at residues 36 to 101, 115 to 181, and 262 to 327; these read TYCV…PRCP, KSCE…PVCR, and RVCV…KVCP. N-linked (GlcNAc...) asparagine glycosylation is present at N120. Residues 181–183 carry the Cell attachment site motif; it reads RGD. N-linked (GlcNAc...) asparagine glycosylation occurs at N295.

In terms of tissue distribution, mainly expressed in the ventral retina.

It is found in the secreted. Seems to antagonize the function of BMP4 by binding to it and preventing its interaction with receptors. This chain is Chordin-like protein 1 (CHRDL1), found in Gallus gallus (Chicken).